The primary structure comprises 316 residues: MAEVKVKVQPPDADPVEIENRIIELCHQFPHGITDQVIQNEMPHIEAQQRAVAINRLLSMGQLDLLRSNTGLLYRIKDSQNAGKMKGSDNQEKLVYQIIEDAGNKGIWSRDIRYKSNLPLTEINKILKNLESKKLIKAVKSVAASKKKVYMLYNLQPDRSVTGGAWYSDQDFESEFVEVLNQQCFKFLQSKAETARESKQNPVIQRNSSFASSHEVWKYICELGISKVELSMEDIETILNTLIYDGKVEMTIIAAKEGTVGSVDGHMKLYRAVNPILPPTGVVRAPCGLCPVFEDCHEGGEISPSNCIYMTEWLEF.

N-acetylalanine is present on Ala2. Glycyl lysine isopeptide (Lys-Gly) (interchain with G-Cter in SUMO2) cross-links involve residues Lys5 and Lys7. [4Fe-4S] cluster is bound by residues Cys287, Cys290, Cys296, and Cys307.

It belongs to the eukaryotic RPC34/RPC39 RNA polymerase subunit family. As to quaternary structure, component of the RNA polymerase III complex consisting of 17 subunits: a ten-subunit horseshoe-shaped catalytic core composed of POLR3A/RPC1, POLR3B/RPC2, POLR1C/RPAC1, POLR1D/RPAC2, POLR3K/RPC10, POLR2E/RPABC1, POLR2F/RPABC2, POLR2H/RPABC3, POLR2K/RPABC4 and POLR2L/RPABC5; a mobile stalk composed of two subunits POLR3H/RPC8 and CRCP/RPC9, protruding from the core and functioning primarily in transcription initiation; and additional subunits homologous to general transcription factors of the RNA polymerase II machinery, POLR3C/RPC3-POLR3F/RPC6-POLR3G/RPC7 heterotrimer required for transcription initiation and POLR3D/RPC4-POLR3E/RPC5 heterodimer involved in both transcription initiation and termination. Directly interacts with POLR3C. Interacts with TBP and TFIIIB90 and GTF3C4. Interacts with MAF1. As part of the RNA polymerase III complex, interacts with PKP2.

Its subcellular location is the nucleus. DNA-dependent RNA polymerase catalyzes the transcription of DNA into RNA using the four ribonucleoside triphosphates as substrates. Specific peripheric component of RNA polymerase III (Pol III) which synthesizes small non-coding RNAs including 5S rRNA, snRNAs, tRNAs and miRNAs from at least 500 distinct genomic loci. Part of POLR3C/RPC3-POLR3F/RPC6-POLR3G/RPC7 heterotrimer that coordinates the dynamics of Pol III stalk and clamp modules during the transition from apo to elongation state. Pol III plays a key role in sensing and limiting infection by intracellular bacteria and DNA viruses, including varicella zoster virus. Acts as a nuclear and cytosolic DNA sensor detecting AT-rich DNA, involved in innate immune response. Can sense non-self dsDNA that serves as template for transcription into dsRNA. The non-self RNA polymerase III transcripts, such as Epstein-Barr virus-encoded RNAs (EBERs) induce type I interferon and NF-kappa-B through the RIG-I pathway. Preferentially binds double-stranded DNA (dsDNA). This Mus musculus (Mouse) protein is DNA-directed RNA polymerase III subunit RPC6.